Here is a 152-residue protein sequence, read N- to C-terminus: Vasotocin-neurophysin VT 1 (152 aa).

A signal peptide spans 1–19; sequence MSDSFLPTCILCLLALSSA. A disulfide bridge connects residues C20 and C25. The residue at position 28 (G28) is a Glycine amide. Disulfide bonds link C40/C84, C43/C57, C51/C74, C58/C64, C91/C103, C97/C115, and C104/C109.

The protein belongs to the vasopressin/oxytocin family.

Its subcellular location is the secreted. In terms of biological role, vasotocin is an antidiuretic hormone. This Catostomus commersonii (White sucker) protein is Vasotocin-neurophysin VT 1.